Here is a 295-residue protein sequence, read N- to C-terminus: ATP synthase gamma chain (295 aa).

The protein belongs to the ATPase gamma chain family. In terms of assembly, F-type ATPases have 2 components, CF(1) - the catalytic core - and CF(0) - the membrane proton channel. CF(1) has five subunits: alpha(3), beta(3), gamma(1), delta(1), epsilon(1). CF(0) has three main subunits: a, b and c.

It is found in the cell inner membrane. Functionally, produces ATP from ADP in the presence of a proton gradient across the membrane. The gamma chain is believed to be important in regulating ATPase activity and the flow of protons through the CF(0) complex. This chain is ATP synthase gamma chain, found in Aliarcobacter butzleri (strain RM4018) (Arcobacter butzleri).